Here is a 337-residue protein sequence, read N- to C-terminus: Protein FAM76B (337 aa).

Positions 143–241 (EQRKSLGSTH…INQSTDSGGT (99 aa)) are disordered. A compositionally biased stretch (low complexity) spans 147–159 (SLGSTHSNSSSSS). Residues 166 to 187 (HHSKHHHHHHHHHRHSSSHHKI) are compositionally biased toward basic residues. Residues 213 to 222 (TPKKKPKLEF) show a composition bias toward basic and acidic residues. The segment covering 226–241 (NGDSSSINQSTDSGGT) has biased composition (polar residues). Residues 301-326 (KDFVEQLQGKNRELLKQVAALSKGKK) adopt a coiled-coil conformation.

It belongs to the FAM76 family.

In terms of biological role, plays a role in hematopoiesis and immune system development, and participates in the inflammatory response. This is Protein FAM76B (fam76b) from Xenopus laevis (African clawed frog).